Here is a 288-residue protein sequence, read N- to C-terminus: Diaminopimelate epimerase (288 aa).

Substrate-binding residues include asparagine 17, glutamine 47, and asparagine 67. Cysteine 76 serves as the catalytic Proton donor. Substrate-binding positions include 77-78 (GN), asparagine 163, asparagine 196, and 214-215 (ER). Cysteine 223 serves as the catalytic Proton acceptor. 224-225 (GS) is a binding site for substrate.

The protein belongs to the diaminopimelate epimerase family. Homodimer.

It localises to the cytoplasm. The enzyme catalyses (2S,6S)-2,6-diaminopimelate = meso-2,6-diaminopimelate. It participates in amino-acid biosynthesis; L-lysine biosynthesis via DAP pathway; DL-2,6-diaminopimelate from LL-2,6-diaminopimelate: step 1/1. Functionally, catalyzes the stereoinversion of LL-2,6-diaminopimelate (L,L-DAP) to meso-diaminopimelate (meso-DAP), a precursor of L-lysine and an essential component of the bacterial peptidoglycan. The chain is Diaminopimelate epimerase from Rhodopseudomonas palustris (strain BisB18).